The primary structure comprises 392 residues: MEPPGRRECPFPSWRFPGLLLAAMVLLLYSFSDACEEPPTFEAMELIGKPKPYYEIGERVDYKCKKGYFYIPPLATHTICDRNHTWLPVSDDACYRETCPYIRDPLNGQAVPANGTYEFGYQMHFICNEGYYLIGEEILYCELKGSVAIWSGKPPICEKVLCTPPPKIKNGKHTFSEVEVFEYLDAVTYSCDPAPGPDPFSLIGESTIYCGDNSVWSRAAPECKVVKCRFPVVENGKQISGFGKKFYYKATVMFECDKGFYLDGSDTIVCDSNSTWDPPVPKCLKVLPPSSTKPPALSHSVSTSSTTKSPASSASGPRPTYKPPVSNYPGYPKPEEGILDSLDVWVIAVIVIAIVVGVAVICVVPYRYLQRRKKKGTYLTDETHREVKFTSL.

The first 34 residues, 1–34 (MEPPGRRECPFPSWRFPGLLLAAMVLLLYSFSDA), serve as a signal peptide directing secretion. 8 cysteine pairs are disulfide-bonded: cysteine 35-cysteine 80, cysteine 64-cysteine 94, cysteine 99-cysteine 141, cysteine 127-cysteine 157, cysteine 162-cysteine 210, cysteine 191-cysteine 223, cysteine 228-cysteine 270, and cysteine 256-cysteine 283. 4 consecutive Sushi domains span residues 35–96 (CEEP…ACYR), 97–159 (ETCP…ICEK), 160–225 (VLCT…ECKV), and 226–285 (VKCR…KCLK). Over 35–343 (CEEPPTFEAM…PEEGILDSLD (309 aa)) the chain is Extracellular. Residues asparagine 83 and asparagine 114 are each glycosylated (N-linked (GlcNAc...) asparagine). Residue threonine 163 is glycosylated (O-linked (GalNAc...) threonine). N-linked (GlcNAc...) asparagine glycosylation is present at asparagine 273. O-linked (GalNAc...) serine glycans are attached at residues serine 290 and serine 291. The segment covering 291–315 (STKPPALSHSVSTSSTTKSPASSAS) has biased composition (low complexity). Residues 291-328 (STKPPALSHSVSTSSTTKSPASSASGPRPTYKPPVSNY) are disordered. The O-linked (GalNAc...) threonine glycan is linked to threonine 292. Residues serine 298, serine 300, and serine 302 are each glycosylated (O-linked (GalNAc...) serine). The O-linked (GalNAc...) threonine glycan is linked to threonine 303. O-linked (GalNAc...) serine glycosylation is found at serine 304 and serine 305. Residues threonine 306 and threonine 307 are each glycosylated (O-linked (GalNAc...) threonine). Serine 309, serine 312, serine 313, and serine 315 each carry an O-linked (GalNAc...) serine glycan. O-linked (GalNAc...) threonine glycosylation is present at threonine 320. Residue tyrosine 321 is modified to Phosphotyrosine. The O-linked (GalNAc...) serine glycan is linked to serine 326. A phosphotyrosine mark is found at aspartate 340, isoleucine 354, valine 355, leucine 369, glutamine 370, and histidine 384. A helical membrane pass occupies residues 344 to 366 (VWVIAVIVIAIVVGVAVICVVPY). Topologically, residues 367-392 (RYLQRRKKKGTYLTDETHREVKFTSL) are cytoplasmic.

Interacts with C3b. Interacts with C4b. Interacts with moesin/MSN. As to quaternary structure, (Microbial infection) Interacts (via N-terminus) with measles virus H protein; this interaction allows attachment and viral entry of vaccine and laboratory-adapted strains. In terms of assembly, (Microbial infection) Interacts with human herpesvirus 6 GH protein. (Microbial infection) Interacts with human adenovirus B/D fiber protein. As to quaternary structure, (Microbial infection) Binds to Streptococcus pyogenes M protein and to type IV pili from Neisseria. Post-translationally, N-glycosylated on Asn-83; Asn-114 and Asn-273 in most tissues, but probably less N-glycosylated in testis. N-glycosylation on Asn-114 and Asn-273 is required for cytoprotective function. N-glycosylation on Asn-114 is required for Measles virus binding. N-glycosylation on Asn-273 is required for Neisseria binding. N-glycosylation is not required for human adenovirus binding. Extensively O-glycosylated in the Ser/Thr-rich domain. O-glycosylation is required for Neisseria binding but not for Measles virus or human adenovirus binding. In terms of processing, in epithelial cells, isoforms B/D/F/H/J/L/3 are phosphorylated by YES1 in response to infection by Neisseria gonorrhoeae; which promotes infectivity. In T-cells, these isoforms may be phosphorylated by LCK. In terms of tissue distribution, expressed by all cells except erythrocytes.

Its subcellular location is the cytoplasmic vesicle. The protein resides in the secretory vesicle. The protein localises to the acrosome inner membrane. Acts as a cofactor for complement factor I, a serine protease which protects autologous cells against complement-mediated injury by cleaving C3b and C4b deposited on host tissue. May be involved in the fusion of the spermatozoa with the oocyte during fertilization. Also acts as a costimulatory factor for T-cells which induces the differentiation of CD4+ into T-regulatory 1 cells. T-regulatory 1 cells suppress immune responses by secreting interleukin-10, and therefore are thought to prevent autoimmunity. In terms of biological role, (Microbial infection) A number of viral and bacterial pathogens seem to bind MCP in order to exploit its immune regulation property and directly induce an immunosuppressive phenotype in T-cells. Functionally, (Microbial infection) Acts as a receptor for Adenovirus subgroup B2 and Ad3. Its function is as follows. (Microbial infection) Acts as a receptor for cultured Measles virus. (Microbial infection) Acts as a receptor for Herpesvirus 6/HHV-6. In terms of biological role, (Microbial infection) May act as a receptor for pathogenic bacteria Neisseria and Streptococcus pyogenes. The protein is Membrane cofactor protein (CD46) of Homo sapiens (Human).